A 476-amino-acid chain; its full sequence is MPMSLRLHNNLTRRVEPFAPLDPSSPTLYVCGPTVYNYAHIGNARGPVVFDVLAALLRRRYGALRYARNITDVDDKINAAAQAQGVPISTITDRFAAIYRQDMAALGVVPPDIEPEATAHIPQIVAMIEQLIATGHAYAAEGHVLFSVSSFEDYGKLSRRDPDEMLAGARVDVAPYKRDPGDFVLWKPSSDDLPGWPSPWGRGRPGWHIECSAMAAAHLGPTIDIHAGGVDLQFPHHENEIAQSECAHGGATFARFWLHNGMLNFSGAKMSKSLGNIETVHELIARHPPEALRYALLSAHYRQPLDWSDGLIEQAKNTLDRLYGTLRDLAALEAESGSDLAVSMTIPAEVESALDDDLNTPLALSVMASIASDARALRSDLMQSGQASARMIELHAARAKLLGAGMALGLLQQDPAAWFSRGTDAGDDARITALVEERSAAKKAKDFARADAIRKQLAEEGIVLEDTPQGVRWKRA.

Cys31 is a binding site for Zn(2+). The short motif at 33 to 43 (PTVYNYAHIGN) is the 'HIGH' region element. Zn(2+) is bound by residues Cys211, His236, and Glu240. The short motif at 269 to 273 (KMSKS) is the 'KMSKS' region element. Lys272 serves as a coordination point for ATP.

Belongs to the class-I aminoacyl-tRNA synthetase family. In terms of assembly, monomer. It depends on Zn(2+) as a cofactor.

The protein localises to the cytoplasm. It catalyses the reaction tRNA(Cys) + L-cysteine + ATP = L-cysteinyl-tRNA(Cys) + AMP + diphosphate. The polypeptide is Cysteine--tRNA ligase (Xanthomonas euvesicatoria pv. vesicatoria (strain 85-10) (Xanthomonas campestris pv. vesicatoria)).